The primary structure comprises 243 residues: Cysteine-rich secretory protein 2 (243 aa).

Residues Met-1–Gly-21 form the signal peptide. The SCP domain maps to Val-41–Tyr-169. 5 disulfides stabilise this stretch: Cys-189/Cys-196, Cys-192/Cys-201, Cys-205/Cys-238, Cys-214/Cys-232, and Cys-223/Cys-236. The region spanning Cys-205–Cys-238 is the ShKT domain.

Belongs to the CRISP family. In terms of assembly, interacts with NSUN4 isoform 3. Testis and epididymis.

The protein localises to the secreted. Its function is as follows. May regulate some ion channels' activity and thereby regulate calcium fluxes during sperm capacitation. This is Cysteine-rich secretory protein 2 (CRISP2) from Homo sapiens (Human).